The chain runs to 318 residues: Forkhead box protein I2 (318 aa).

Residues 1–30 are disordered; the sequence is MATYCDDLGPSSAPPGQAQATAHPPGYEPG. The fork-head DNA-binding region spans 102–196; the sequence is RPPYSYSALI…DNGNFRRKRK (95 aa).

It is found in the nucleus. Functionally, possible transcriptional activator. The chain is Forkhead box protein I2 (FOXI2) from Homo sapiens (Human).